A 386-amino-acid polypeptide reads, in one-letter code: Phosphoglycerate kinase (386 aa).

Residues 21–23 (DLN), arginine 36, 59–62 (HLGR), arginine 113, and arginine 146 each bind substrate. ATP contacts are provided by residues lysine 197, glutamate 314, and 340–343 (GGDT).

Belongs to the phosphoglycerate kinase family. In terms of assembly, monomer.

The protein resides in the cytoplasm. It carries out the reaction (2R)-3-phosphoglycerate + ATP = (2R)-3-phospho-glyceroyl phosphate + ADP. It participates in carbohydrate degradation; glycolysis; pyruvate from D-glyceraldehyde 3-phosphate: step 2/5. This Vibrio vulnificus (strain CMCP6) protein is Phosphoglycerate kinase.